We begin with the raw amino-acid sequence, 309 residues long: Homoserine O-succinyltransferase (309 aa).

C142 acts as the Acyl-thioester intermediate in catalysis. Substrate contacts are provided by K163 and S192. Catalysis depends on H235, which acts as the Proton acceptor. Residue E237 is part of the active site. Position 249 (R249) interacts with substrate.

This sequence belongs to the MetA family. Homodimer.

It localises to the cytoplasm. It catalyses the reaction L-homoserine + succinyl-CoA = O-succinyl-L-homoserine + CoA. Its pathway is amino-acid biosynthesis; L-methionine biosynthesis via de novo pathway; O-succinyl-L-homoserine from L-homoserine: step 1/1. Its function is as follows. Transfers a succinyl group from succinyl-CoA to L-homoserine, forming succinyl-L-homoserine. This is Homoserine O-succinyltransferase from Salmonella arizonae (strain ATCC BAA-731 / CDC346-86 / RSK2980).